A 400-amino-acid chain; its full sequence is S-adenosylmethionine synthase (400 aa).

Histidine 17 is a binding site for ATP. Aspartate 19 is a Mg(2+) binding site. Glutamate 45 serves as a coordination point for K(+). Positions 58 and 101 each coordinate L-methionine. The interval 101–111 is flexible loop; sequence QSADIAMGVDQ. Residues 177 to 179, 244 to 245, aspartate 253, 259 to 260, alanine 276, and lysine 280 each bind ATP; these read DGK, RF, and RK. Aspartate 253 lines the L-methionine pocket. Lysine 284 contacts L-methionine.

This sequence belongs to the AdoMet synthase family. In terms of assembly, homotetramer; dimer of dimers. Mg(2+) serves as cofactor. K(+) is required as a cofactor.

The protein resides in the cytoplasm. The catalysed reaction is L-methionine + ATP + H2O = S-adenosyl-L-methionine + phosphate + diphosphate. The protein operates within amino-acid biosynthesis; S-adenosyl-L-methionine biosynthesis; S-adenosyl-L-methionine from L-methionine: step 1/1. Functionally, catalyzes the formation of S-adenosylmethionine (AdoMet) from methionine and ATP. The overall synthetic reaction is composed of two sequential steps, AdoMet formation and the subsequent tripolyphosphate hydrolysis which occurs prior to release of AdoMet from the enzyme. This chain is S-adenosylmethionine synthase, found in Bacillus velezensis (strain DSM 23117 / BGSC 10A6 / LMG 26770 / FZB42) (Bacillus amyloliquefaciens subsp. plantarum).